The following is a 461-amino-acid chain: V-type ATP synthase beta chain 1 (461 aa).

This sequence belongs to the ATPase alpha/beta chains family.

Produces ATP from ADP in the presence of a proton gradient across the membrane. The V-type beta chain is a regulatory subunit. The chain is V-type ATP synthase beta chain 1 from Clostridium tetani (strain Massachusetts / E88).